The chain runs to 372 residues: Aminomethyltransferase (372 aa).

It belongs to the GcvT family. In terms of assembly, the glycine cleavage system is composed of four proteins: P, T, L and H.

The catalysed reaction is N(6)-[(R)-S(8)-aminomethyldihydrolipoyl]-L-lysyl-[protein] + (6S)-5,6,7,8-tetrahydrofolate = N(6)-[(R)-dihydrolipoyl]-L-lysyl-[protein] + (6R)-5,10-methylene-5,6,7,8-tetrahydrofolate + NH4(+). The glycine cleavage system catalyzes the degradation of glycine. This chain is Aminomethyltransferase, found in Burkholderia ambifaria (strain MC40-6).